Consider the following 235-residue polypeptide: Carbohydrate deacetylase (235 aa).

Mg(2+) is bound by residues histidine 61 and histidine 124.

Belongs to the YdjC deacetylase family. Mg(2+) is required as a cofactor.

In terms of biological role, probably catalyzes the deacetylation of acetylated carbohydrates an important step in the degradation of oligosaccharides. This Bacillus cereus (strain B4264) protein is Carbohydrate deacetylase.